Reading from the N-terminus, the 313-residue chain is Beta-lactamase (313 aa).

Residues 1 to 15 (MQRIGVTDYTILGTV) form the signal peptide. Ser-190 serves as the catalytic Acyl-ester intermediate.

Belongs to the class-C beta-lactamase family.

It carries out the reaction a beta-lactam + H2O = a substituted beta-amino acid. In terms of biological role, upon expression in E.coli enables the latter to utilize penicillin as a carbon source. In Burkholderia multivorans (strain ATCC 17616 / 249), this protein is Beta-lactamase (penA).